A 394-amino-acid chain; its full sequence is GDNF family receptor alpha-like (394 aa).

A signal peptide spans 1–18 (MIVFIFLAMGLSLENEYT). Residues 19–351 (SQTNNCTYLR…TGFHSPFNGE (333 aa)) lie on the Extracellular side of the membrane. Residues N23, N50, N62, N67, N103, and N116 are each glycosylated (N-linked (GlcNAc...) asparagine). Cystine bridges form between C131–C189, C138–C144, C155–C167, C162–C210, C191–C198, C220–C291, C227–C233, C244–C275, C252–C258, C269–C316, and C293–C304. The tract at residues 149-228 (ASYLKACSAN…TCLSVIRSCQ (80 aa)) is required for interaction with GDF15. A helical transmembrane segment spans residues 352–371 (VIYAAMCMTVTCGILLLVMV). Residues 372–394 (KLRTSRISSKARDPSSIQIPGEL) are Cytoplasmic-facing.

Belongs to the GDNFR family. In terms of assembly, interacts (via the extracellular domain) with GDF15 and RET; receptor of GDF15, mediates cellular signaling through interaction with RET after GDF15-binding. Interaction with RET requires previous GDF15-binding. Post-translationally, cleaved and inactivated by MMP14, inhibiting the GDF15-GFRAL aversive response. Expressed in the brainstem, restricted to cells in the area postrema and the immediately adjacent region of the nucleus tractus solitarius (at protein level). Detected at low levels in testis and adipose tissue.

It is found in the cell membrane. Specifically inhibited by 3P10 monoclonal antibody. Strongly activated by LY3463251, a long-acting and stable agonist composed of GDF15 conjugated monomeric human IgG4 Fc. In terms of biological role, brainstem-restricted receptor for GDF15 hormone, which triggers an aversive response, characterized by nausea, vomiting, and/or loss of appetite in response to various stresses. The aversive response is both required to reduce continuing exposure to those stresses at the time of exposure and to promote avoidance behavior in the future. The GDF15-GFRAL aversive response is triggered by stresses, such as anticancer drugs (camptothecin or cisplatin), cancers or drugs such as metformin. Upon interaction with its ligand, GDF15, mediates the GDF15-induced autophosphorylation and activation of the RET tyrosine kinase receptor, leading to activation of MAPK- and AKT- signaling pathways. Ligand-binding activates GFRAL-expressing neurons localized in the area postrema and nucleus tractus solitarius of the brainstem. The GDF15-GFRAL signal induces expression of genes involved in metabolism, such as lipid metabolism in adipose tissues. The chain is GDNF family receptor alpha-like from Homo sapiens (Human).